The following is a 113-amino-acid chain: UPF0482 protein CKO_01577 (113 aa).

Positions 1 to 28 (MNNTLSKRLCLTAMLALGAVVYTTSAFA) are cleaved as a signal peptide. Residues 44–67 (RQHAAMEKEQWNDTRSLRQKVNTR) form a disordered region. Residues 47-59 (AAMEKEQWNDTRS) show a composition bias toward basic and acidic residues.

Belongs to the UPF0482 family.

This Citrobacter koseri (strain ATCC BAA-895 / CDC 4225-83 / SGSC4696) protein is UPF0482 protein CKO_01577.